Reading from the N-terminus, the 134-residue chain is Mite allergen Blo t 5 (134 aa).

An N-terminal signal peptide occupies residues Met1–Ala17. Residues Gln18–Leu113 adopt a coiled-coil conformation.

Belongs to the mite group 5 allergen family. May exist as homodimer and homotrimer. In terms of tissue distribution, midgut and hindgut contents as well as fecal pellets (at protein level).

The sequence is that of Mite allergen Blo t 5 (BLOT5) from Blomia tropicalis (Mite).